Here is a 623-residue protein sequence, read N- to C-terminus: Pentatricopeptide repeat-containing protein At5g15340, mitochondrial (623 aa).

A mitochondrion-targeting transit peptide spans 1-16 (MKCLSYQKVRLLLRHC). PPR repeat units follow at residues 42-72 (RSYLSNALFQFYASSGEMVTAQKLFDEIPLS), 75-109 (DNVDWTTLLSSFSRYGLLVNSMKLFVEMRRKRVEI), 110-144 (DDVSVVCLFGVCAKLEDLGFAQQGHGVAVKMGVLT), 145-179 (SVKVCNALMDMYGKCGLVSEVKRIFEELEEKSVVS), 180-206 (WTVVLDTVVKWEGLERGREVFHEMPER), 207-237 (NAVAWTVMVAGYLGAGFTREVLELLAEMVFR), 243-277 (NFVTLCSMLSACAQSGNLVVGRWVHVYALKKEMMM), 285-319 (DVMVGTALVDMYAKCGNIDSSMNVFRLMRKRNVVT), 320-346 (WNALFSGLAMHGKGRMVIDMFPQMIRE), 350-384 (DDLTFTAVLSACSHSGIVDEGWRCFHSLRFYGLEP), and 385-419 (KVDHYACMVDLLGRAGLIEEAEILMREMPVPPNEV). The interval 420–495 (VLGSLLGSCS…IPGLSSIYVN (76 aa)) is type E motif. The type E(+) motif stretch occupies residues 496–526 (DSVHRFSSGDRSHPRTKEIYLKLNEVIERIR). The tract at residues 527–623 (SAGYVPDVSG…GGSCSCSDYW (97 aa)) is type DYW motif.

Belongs to the PPR family. PCMP-H subfamily.

Its subcellular location is the mitochondrion. In Arabidopsis thaliana (Mouse-ear cress), this protein is Pentatricopeptide repeat-containing protein At5g15340, mitochondrial (PCMP-H91).